Here is a 358-residue protein sequence, read N- to C-terminus: Phospho-N-acetylmuramoyl-pentapeptide-transferase (358 aa).

10 helical membrane passes run 13–47, 81–101, 106–126, 148–168, 171–191, 201–221, 228–248, 255–275, 278–298, and 336–356; these read LFIL…SIFI, MGGI…TINL, LILL…DDYL, ISII…LITI, SWAI…LVGI, LDGL…TEIL, LFVF…FLKY, IFMG…IALL, SIFT…SVII, and IVEN…VLKI.

The protein belongs to the glycosyltransferase 4 family. MraY subfamily. Mg(2+) is required as a cofactor.

The protein localises to the cell inner membrane. The enzyme catalyses UDP-N-acetyl-alpha-D-muramoyl-L-alanyl-gamma-D-glutamyl-meso-2,6-diaminopimeloyl-D-alanyl-D-alanine + di-trans,octa-cis-undecaprenyl phosphate = di-trans,octa-cis-undecaprenyl diphospho-N-acetyl-alpha-D-muramoyl-L-alanyl-D-glutamyl-meso-2,6-diaminopimeloyl-D-alanyl-D-alanine + UMP. It functions in the pathway cell wall biogenesis; peptidoglycan biosynthesis. Its function is as follows. Catalyzes the initial step of the lipid cycle reactions in the biosynthesis of the cell wall peptidoglycan: transfers peptidoglycan precursor phospho-MurNAc-pentapeptide from UDP-MurNAc-pentapeptide onto the lipid carrier undecaprenyl phosphate, yielding undecaprenyl-pyrophosphoryl-MurNAc-pentapeptide, known as lipid I. The polypeptide is Phospho-N-acetylmuramoyl-pentapeptide-transferase (Prochlorococcus marinus (strain MIT 9301)).